The chain runs to 202 residues: Small ribosomal subunit protein uS5 (202 aa).

Residues 1–13 show a composition bias toward gly residues; the sequence is MPGQQRRGGGSGG. The tract at residues 1–31 is disordered; it reads MPGQQRRGGGSGGSDRRERRDRSGGGPAQEK. The segment covering 14-23 has biased composition (basic and acidic residues); sequence SDRRERRDRS. In terms of domain architecture, S5 DRBM spans 34–97; that stretch reads YVERVVAINR…EEAKKHFFKV (64 aa).

This sequence belongs to the universal ribosomal protein uS5 family. As to quaternary structure, part of the 30S ribosomal subunit. Contacts proteins S4 and S8.

In terms of biological role, with S4 and S12 plays an important role in translational accuracy. Its function is as follows. Located at the back of the 30S subunit body where it stabilizes the conformation of the head with respect to the body. The polypeptide is Small ribosomal subunit protein uS5 (Frankia alni (strain DSM 45986 / CECT 9034 / ACN14a)).